We begin with the raw amino-acid sequence, 392 residues long: Probable myosin light chain kinase DDB_G0271550 (392 aa).

The region spanning 20-278 (YEFGPEIGRG…ASQCIKHPWL (259 aa)) is the Protein kinase domain. ATP-binding positions include 26–34 (IGRGAFSIV) and lysine 49. Aspartate 142 acts as the Proton acceptor in catalysis. The span at 317–326 (SQSTPNLHSA) shows a compositional bias: polar residues. The disordered stretch occupies residues 317 to 392 (SQSTPNLHSA…NNNNNNNNNI (76 aa)). The span at 327–392 (NSNTNTNSLS…NNNNNNNNNI (66 aa)) shows a compositional bias: low complexity.

The protein belongs to the protein kinase superfamily. CAMK Ser/Thr protein kinase family. CaMK subfamily.

It carries out the reaction L-seryl-[myosin light chain] + ATP = O-phospho-L-seryl-[myosin light chain] + ADP + H(+). It catalyses the reaction L-threonyl-[myosin light chain] + ATP = O-phospho-L-threonyl-[myosin light chain] + ADP + H(+). In terms of biological role, may phosphorylate a specific serine in the N-terminus of a myosin light chain. This is Probable myosin light chain kinase DDB_G0271550 from Dictyostelium discoideum (Social amoeba).